The chain runs to 93 residues: MYKQQYFISGKVQGVGFRFFTEQIANNMKLKGFVKNLNDGRVEIVAFFNTNEQMKKFEKLLKNGNKYSNIENIEKKTLDENYPFQFNNFKIYY.

Positions 3-93 (KQQYFISGKV…FQFNNFKIYY (91 aa)) constitute an Acylphosphatase-like domain. Residues Arg-18 and Asn-36 contribute to the active site.

Belongs to the acylphosphatase family.

The enzyme catalyses an acyl phosphate + H2O = a carboxylate + phosphate + H(+). The chain is Acylphosphatase (acyP) from Borrelia garinii subsp. bavariensis (strain ATCC BAA-2496 / DSM 23469 / PBi) (Borreliella bavariensis).